Consider the following 100-residue polypeptide: Small ribosomal subunit protein uS14c (100 aa).

It belongs to the universal ribosomal protein uS14 family. Part of the 30S ribosomal subunit.

It localises to the plastid. Its subcellular location is the chloroplast. Its function is as follows. Binds 16S rRNA, required for the assembly of 30S particles. The protein is Small ribosomal subunit protein uS14c of Gracilaria tenuistipitata var. liui (Red alga).